Reading from the N-terminus, the 440-residue chain is Ribosomal protein uS12 methylthiotransferase RimO (440 aa).

Positions 5-116 (PTIAISHLGC…IVNVIERAEQ (112 aa)) constitute an MTTase N-terminal domain. Residues Cys-14, Cys-50, Cys-79, Cys-154, Cys-158, and Cys-161 each contribute to the [4Fe-4S] cluster site. The Radical SAM core domain occupies 140 to 370 (TTTEGVAYLR…ALQQPISWRK (231 aa)). The 67-residue stretch at 372 to 438 (QQEVGKTVEV…EYDLFGQVVS (67 aa)) folds into the TRAM domain.

It belongs to the methylthiotransferase family. RimO subfamily. [4Fe-4S] cluster is required as a cofactor.

It localises to the cytoplasm. The catalysed reaction is L-aspartate(89)-[ribosomal protein uS12]-hydrogen + (sulfur carrier)-SH + AH2 + 2 S-adenosyl-L-methionine = 3-methylsulfanyl-L-aspartate(89)-[ribosomal protein uS12]-hydrogen + (sulfur carrier)-H + 5'-deoxyadenosine + L-methionine + A + S-adenosyl-L-homocysteine + 2 H(+). Its function is as follows. Catalyzes the methylthiolation of an aspartic acid residue of ribosomal protein uS12. The sequence is that of Ribosomal protein uS12 methylthiotransferase RimO from Trichormus variabilis (strain ATCC 29413 / PCC 7937) (Anabaena variabilis).